We begin with the raw amino-acid sequence, 257 residues long: Mediator of RNA polymerase II transcription subunit 7 (257 aa).

The tract at residues 33–74 (EWQRQQNDEEIETKQEEADDKDEKDNEKQNETQDTVPPGELR) is disordered. Basic and acidic residues predominate over residues 44 to 63 (ETKQEEADDKDEKDNEKQNE).

This sequence belongs to the Mediator complex subunit 7 family. In terms of assembly, component of the Mediator complex.

The protein resides in the nucleus. Functionally, component of the Mediator complex, a coactivator involved in the regulated transcription of nearly all RNA polymerase II-dependent genes. Mediator functions as a bridge to convey information from gene-specific regulatory proteins to the basal RNA polymerase II transcription machinery. Mediator is recruited to promoters by direct interactions with regulatory proteins and serves as a scaffold for the assembly of a functional preinitiation complex with RNA polymerase II and the general transcription factors. This chain is Mediator of RNA polymerase II transcription subunit 7 (MED7), found in Scheffersomyces stipitis (strain ATCC 58785 / CBS 6054 / NBRC 10063 / NRRL Y-11545) (Yeast).